The primary structure comprises 416 residues: Gamma-glutamyl phosphate reductase (416 aa).

Belongs to the gamma-glutamyl phosphate reductase family.

It is found in the cytoplasm. It carries out the reaction L-glutamate 5-semialdehyde + phosphate + NADP(+) = L-glutamyl 5-phosphate + NADPH + H(+). It participates in amino-acid biosynthesis; L-proline biosynthesis; L-glutamate 5-semialdehyde from L-glutamate: step 2/2. In terms of biological role, catalyzes the NADPH-dependent reduction of L-glutamate 5-phosphate into L-glutamate 5-semialdehyde and phosphate. The product spontaneously undergoes cyclization to form 1-pyrroline-5-carboxylate. In Salmonella newport (strain SL254), this protein is Gamma-glutamyl phosphate reductase.